Consider the following 198-residue polypeptide: Peptidyl-tRNA hydrolase (198 aa).

Tyrosine 18 is a tRNA binding site. Catalysis depends on histidine 23, which acts as the Proton acceptor. Residues phenylalanine 69, asparagine 71, and asparagine 117 each coordinate tRNA.

The protein belongs to the PTH family. As to quaternary structure, monomer.

The protein localises to the cytoplasm. The enzyme catalyses an N-acyl-L-alpha-aminoacyl-tRNA + H2O = an N-acyl-L-amino acid + a tRNA + H(+). Functionally, hydrolyzes ribosome-free peptidyl-tRNAs (with 1 or more amino acids incorporated), which drop off the ribosome during protein synthesis, or as a result of ribosome stalling. Its function is as follows. Catalyzes the release of premature peptidyl moieties from peptidyl-tRNA molecules trapped in stalled 50S ribosomal subunits, and thus maintains levels of free tRNAs and 50S ribosomes. This is Peptidyl-tRNA hydrolase from Idiomarina loihiensis (strain ATCC BAA-735 / DSM 15497 / L2-TR).